The following is a 212-amino-acid chain: ATP-dependent dethiobiotin synthetase BioD (212 aa).

Position 13–18 (13–18 (GIGKTV)) interacts with ATP. T17 lines the Mg(2+) pocket. The active site involves K33. E100 provides a ligand contact to Mg(2+). ATP contacts are provided by residues 100 to 103 (EGAG) and 184 to 186 (PHV).

This sequence belongs to the dethiobiotin synthetase family. Homodimer. The cofactor is Mg(2+).

It is found in the cytoplasm. It carries out the reaction (7R,8S)-7,8-diammoniononanoate + CO2 + ATP = (4R,5S)-dethiobiotin + ADP + phosphate + 3 H(+). Its pathway is cofactor biosynthesis; biotin biosynthesis; biotin from 7,8-diaminononanoate: step 1/2. In terms of biological role, catalyzes a mechanistically unusual reaction, the ATP-dependent insertion of CO2 between the N7 and N8 nitrogen atoms of 7,8-diaminopelargonic acid (DAPA, also called 7,8-diammoniononanoate) to form a ureido ring. In Nitrobacter hamburgensis (strain DSM 10229 / NCIMB 13809 / X14), this protein is ATP-dependent dethiobiotin synthetase BioD.